The chain runs to 109 residues: Ribonuclease P protein component (109 aa).

The protein belongs to the RnpA family. In terms of assembly, consists of a catalytic RNA component (M1 or rnpB) and a protein subunit.

It carries out the reaction Endonucleolytic cleavage of RNA, removing 5'-extranucleotides from tRNA precursor.. Its function is as follows. RNaseP catalyzes the removal of the 5'-leader sequence from pre-tRNA to produce the mature 5'-terminus. It can also cleave other RNA substrates such as 4.5S RNA. The protein component plays an auxiliary but essential role in vivo by binding to the 5'-leader sequence and broadening the substrate specificity of the ribozyme. This is Ribonuclease P protein component from Streptococcus agalactiae serotype III (strain NEM316).